Consider the following 469-residue polypeptide: Tryptophan biosynthesis protein TrpCF (469 aa).

The segment at 1–271 is indole-3-glycerol phosphate synthase; that stretch reads MSEQLSEHIS…LAVRKIVLGE (271 aa). An N-(5'-phosphoribosyl)anthranilate isomerase region spans residues 272 to 469; that stretch reads HKVCGLTHPD…QQVFQQLRNY (198 aa).

It in the N-terminal section; belongs to the TrpC family. In the C-terminal section; belongs to the TrpF family. As to quaternary structure, monomer.

It carries out the reaction N-(5-phospho-beta-D-ribosyl)anthranilate = 1-(2-carboxyphenylamino)-1-deoxy-D-ribulose 5-phosphate. It catalyses the reaction 1-(2-carboxyphenylamino)-1-deoxy-D-ribulose 5-phosphate + H(+) = (1S,2R)-1-C-(indol-3-yl)glycerol 3-phosphate + CO2 + H2O. It functions in the pathway amino-acid biosynthesis; L-tryptophan biosynthesis; L-tryptophan from chorismate: step 3/5. Its pathway is amino-acid biosynthesis; L-tryptophan biosynthesis; L-tryptophan from chorismate: step 4/5. Functionally, bifunctional enzyme that catalyzes two sequential steps of tryptophan biosynthetic pathway. The first reaction is catalyzed by the isomerase, coded by the TrpF domain; the second reaction is catalyzed by the synthase, coded by the TrpC domain. The polypeptide is Tryptophan biosynthesis protein TrpCF (trpCF) (Vibrio cholerae serotype O1 (strain ATCC 39315 / El Tor Inaba N16961)).